We begin with the raw amino-acid sequence, 521 residues long: MNAYAYTACLGIYGSTPNNEQLVLGSPDQLQRNKPRFRLIVLPHAPAASPFYPPWRSFAPDWEGQGARPMDHFKVGNLRFQLETHRIDEHSTFGKLFGHAPSPSQSCVSFQKKSDRAEPLLLARCSAASWSCIHPPTVLYFVAYQLEYPFAARFSATKISPIQDKMVATSDVPIVGSLYVYAPNKGAPIFFTIAFAISTILHSWQCHRYKAWKLIWLQPACAALFTLGYALREYGAYNYLYDGTEKAPLALFILSQICIYLGPPLLELANYHILGRVFHYVPYAAPFNPGRVTAFFGGLMAIVEGLSGSGVSLTANAKAKESTKKTGHNLLLVALALQVCVIFIFVYLSVLFHRRCIKAKVPAQSKAVKSTLMTLYLSMALIFIRCVFRLVEMATSSTSVDITSMERLMKLSPVLRNEAYFYAFEASLMLINSFLWNVQHPGPHLPGDTHIYLAQDGTEVEGEGDGSEDRPLLLNMANTLMFGLLYRDDKDHTHSQPQELYENPNGNGHKKFRLGNGGRAT.

7 helical membrane-spanning segments follow: residues 186–206, 211–231, 249–269, 292–312, 332–352, 371–391, and 418–438; these read GAPI…SWQC, AWKL…GYAL, LALF…LELA, VTAF…SGVS, LVAL…SVLF, TLMT…FRLV, and EAYF…LWNV. The segment at 493-521 is disordered; sequence THSQPQELYENPNGNGHKKFRLGNGGRAT.

Belongs to the lipid-translocating exporter (LTE) (TC 9.A.26.1) family.

Its subcellular location is the membrane. Functionally, lipid-translocating exporter-like protein; part of the gene cluster that mediates the biosynthesis of phomenoic acid, a long chain aliphatic carboxylic acid that does not appear to be essential for pathogenicity but may play a role in allowing to outcompete other fungi in the environmental niche via its antifungal properties. In Leptosphaeria maculans (strain JN3 / isolate v23.1.3 / race Av1-4-5-6-7-8) (Blackleg fungus), this protein is Lipid-translocating exporter-like protein RTA1.